Consider the following 512-residue polypeptide: Amidase 2 (512 aa).

Residues Lys122 and Ser197 each act as charge relay system in the active site. Substrate is bound by residues Ser197 and 218-221; that span reads IGGS. Ser221 functions as the Acyl-ester intermediate in the catalytic mechanism.

It belongs to the amidase family.

The enzyme catalyses a monocarboxylic acid amide + H2O = a monocarboxylate + NH4(+). The protein operates within xenobiotic degradation. Functionally, amidase; part of the Fusarium detoxification of benzoxazolinone cluster 2 (FDB2) involved in the degradation of benzoxazolinones produced by the host plant. Maize, wheat, and rye produce the 2 benzoxazinone phytoanticipins 2,4-dihy-droxy-7-methoxy-1,4-benzoxazin-3-one (DIMBOA) and 2,4-dihydroxy-1,4-benzoxazin-3-one (DIBOA) that, due to their inherent instability once released, spontaneously degrade to the more stable corresponding benzoxazolinones, 6-methoxy-2-benzoxazolinone (MBOA) and 2-benzoxazolinone (BOA), respectively. The first step in the detoxification of benzoxazolinones involves the hydrolysis of the cyclic ester bond of benzoxazolinones by the FDB1 cluster gamma-lactamase MBL1 to aminophenols. MBL1 is able to convert BOA into 2-aminophenol (2-AP), as well as MBOA into 5-methoxy-2-aminophenol (2-AMP). The FDB2 cluster N-malonyltransferase FDB2/NAT1 then metabolizes aminophenols via N-malonylation to non-toxic malonamic acids. FDB2/NAT1 converts 2-AP into N-(2-hydroxyphenyl) malonamic acid (HPMA) and 2-AMP into N-(2-hydroxy-4-methoxyphenyl) malonamic acid (HMPMA). The duplicated dienlactone hydrolases DLH1 and DLH2 may provide redundant function for hydrolyzing the lactone moiety in the BOA molecule. The roles of the amidases an other enzymes encoded by the 2 FDB clusters have not been identified so far. This Gibberella moniliformis (strain M3125 / FGSC 7600) (Maize ear and stalk rot fungus) protein is Amidase 2.